The sequence spans 148 residues: Large ribosomal subunit protein uL16 (148 aa).

The protein belongs to the universal ribosomal protein uL16 family. As to quaternary structure, part of the 50S ribosomal subunit.

Binds 23S rRNA and is also seen to make contacts with the A and possibly P site tRNAs. The polypeptide is Large ribosomal subunit protein uL16 (Gloeobacter violaceus (strain ATCC 29082 / PCC 7421)).